The primary structure comprises 316 residues: Transaldolase (316 aa).

Lys132 serves as the catalytic Schiff-base intermediate with substrate.

This sequence belongs to the transaldolase family. Type 1 subfamily. Homodimer.

It is found in the cytoplasm. The enzyme catalyses D-sedoheptulose 7-phosphate + D-glyceraldehyde 3-phosphate = D-erythrose 4-phosphate + beta-D-fructose 6-phosphate. It participates in carbohydrate degradation; pentose phosphate pathway; D-glyceraldehyde 3-phosphate and beta-D-fructose 6-phosphate from D-ribose 5-phosphate and D-xylulose 5-phosphate (non-oxidative stage): step 2/3. Transaldolase is important for the balance of metabolites in the pentose-phosphate pathway. The chain is Transaldolase from Marinomonas sp. (strain MWYL1).